The sequence spans 329 residues: Phenylalanine--tRNA ligase alpha subunit (329 aa).

The protein belongs to the class-II aminoacyl-tRNA synthetase family. Phe-tRNA synthetase alpha subunit type 1 subfamily. In terms of assembly, tetramer of two alpha and two beta subunits. Requires Mg(2+) as cofactor.

Its subcellular location is the cytoplasm. It catalyses the reaction tRNA(Phe) + L-phenylalanine + ATP = L-phenylalanyl-tRNA(Phe) + AMP + diphosphate + H(+). This is Phenylalanine--tRNA ligase alpha subunit (pheS) from Buchnera aphidicola subsp. Schizaphis graminum (strain Sg).